We begin with the raw amino-acid sequence, 121 residues long: Large ribosomal subunit protein bL12 (121 aa).

The protein belongs to the bacterial ribosomal protein bL12 family. In terms of assembly, homodimer. Part of the ribosomal stalk of the 50S ribosomal subunit. Forms a multimeric L10(L12)X complex, where L10 forms an elongated spine to which 2 to 4 L12 dimers bind in a sequential fashion. Binds GTP-bound translation factors.

Its function is as follows. Forms part of the ribosomal stalk which helps the ribosome interact with GTP-bound translation factors. Is thus essential for accurate translation. The sequence is that of Large ribosomal subunit protein bL12 from Xanthomonas campestris pv. campestris (strain B100).